Consider the following 386-residue polypeptide: Succinate--CoA ligase [ADP-forming] subunit beta (386 aa).

The ATP-grasp domain maps to 9-244 (KEILRNFGVP…LDEEDPAEVE (236 aa)). ATP-binding positions include Lys46, 53–55 (GRG), Glu99, Ala102, and Glu107. Mg(2+) contacts are provided by Asn199 and Asp213. Residues Asn264 and 321 to 323 (GIM) each bind substrate.

Belongs to the succinate/malate CoA ligase beta subunit family. In terms of assembly, heterotetramer of two alpha and two beta subunits. The cofactor is Mg(2+).

The enzyme catalyses succinate + ATP + CoA = succinyl-CoA + ADP + phosphate. It carries out the reaction GTP + succinate + CoA = succinyl-CoA + GDP + phosphate. It functions in the pathway carbohydrate metabolism; tricarboxylic acid cycle; succinate from succinyl-CoA (ligase route): step 1/1. Its function is as follows. Succinyl-CoA synthetase functions in the citric acid cycle (TCA), coupling the hydrolysis of succinyl-CoA to the synthesis of either ATP or GTP and thus represents the only step of substrate-level phosphorylation in the TCA. The beta subunit provides nucleotide specificity of the enzyme and binds the substrate succinate, while the binding sites for coenzyme A and phosphate are found in the alpha subunit. This Polaromonas naphthalenivorans (strain CJ2) protein is Succinate--CoA ligase [ADP-forming] subunit beta.